We begin with the raw amino-acid sequence, 930 residues long: Endoplasmic reticulum aminopeptidase 1 (930 aa).

Residues 1 to 2 (MP) lie on the Cytoplasmic side of the membrane. A helical; Signal-anchor for type II membrane protein transmembrane segment spans residues 3-23 (SLLSLVLTFLAVSSPSCCQNS). Topologically, residues 24–930 (DTASPKASNG…WLQKERQELL (907 aa)) are lumenal. N-linked (GlcNAc...) asparagine glycosylation is found at Asn59 and Asn143. Substrate is bound by residues Glu172 and 306-310 (GAMEN). His342 serves as a coordination point for Zn(2+). Glu343 serves as the catalytic Proton acceptor. Residues His346 and Glu365 each contribute to the Zn(2+) site. Cys393 and Cys432 form a disulfide bridge. 2 N-linked (GlcNAc...) asparagine glycosylation sites follow: Asn403 and Asn655. Cys725 and Cys732 form a disulfide bridge. Asn749 and Asn890 each carry an N-linked (GlcNAc...) asparagine glycan.

This sequence belongs to the peptidase M1 family. As to quaternary structure, monomer. May also exist as a heterodimer; with ERAP2. Interacts with RBMX. Zn(2+) is required as a cofactor. N-glycosylated. In terms of tissue distribution, ubiquitous.

The protein resides in the endoplasmic reticulum membrane. In terms of biological role, aminopeptidase that plays a central role in peptide trimming, a step required for the generation of most HLA class I-binding peptides. Peptide trimming is essential to customize longer precursor peptides to fit them to the correct length required for presentation on MHC class I molecules. Strongly prefers substrates 9-16 residues long. Rapidly degrades 13-mer to a 9-mer and then stops. Preferentially hydrolyzes the residue Leu and peptides with a hydrophobic C-terminus, while it has weak activity toward peptides with charged C-terminus. May play a role in the inactivation of peptide hormones. May be involved in the regulation of blood pressure through the inactivation of angiotensin II and/or the generation of bradykinin in the kidney. This Rattus norvegicus (Rat) protein is Endoplasmic reticulum aminopeptidase 1 (Erap1).